The sequence spans 32 residues: Ovostatin (32 aa).

A cross-link (isoglutamyl cysteine thioester (Cys-Gln)) is located at residues 27–30; it reads CGEQ.

This sequence belongs to the protease inhibitor I39 (alpha-2-macroglobulin) family. As to quaternary structure, homotetramer, which consists of two pairs of disulfide-linked chains.

It is found in the secreted. In terms of biological role, is able to inhibit all four classes of proteinases by a unique 'trapping' mechanism. This protein has a peptide stretch, called the 'bait region' which contains specific cleavage sites for different proteinases. When a proteinase cleaves the bait region, a conformational change is induced in the protein which traps the proteinase. The entrapped enzyme remains active against low molecular weight substrates (activity against high molecular weight substrates is greatly reduced). Following cleavage in the bait region a thioester bond is hydrolyzed and mediates the covalent binding of the protein to the proteinase. The chain is Ovostatin from Anas platyrhynchos (Mallard).